The following is a 126-amino-acid chain: Glycine cleavage system H protein (126 aa).

Residues 21–103 (TVTIGISEHA…YEGGWIVKVK (83 aa)) form the Lipoyl-binding domain. K62 carries the post-translational modification N6-lipoyllysine.

The protein belongs to the GcvH family. The glycine cleavage system is composed of four proteins: P, T, L and H. (R)-lipoate is required as a cofactor.

Functionally, the glycine cleavage system catalyzes the degradation of glycine. The H protein shuttles the methylamine group of glycine from the P protein to the T protein. In Vibrio atlanticus (strain LGP32) (Vibrio splendidus (strain Mel32)), this protein is Glycine cleavage system H protein.